The sequence spans 313 residues: MLDNVLRIATRQSPLALWQAHYVKDALMATHPGLTVELVPMVTRGDVILDTPLAKVGGKGLFVKELEIALLEKRADIAVHSMKDVPVAFPDGLGLVTICEREDPRDAFVSNKYHSLDDLPAGSIVGTSSLRRQCQLAERRPDLIIRSLRGNVGTRLGKLDNGDYDAIILAVAGLKRLGLESRIRTALPPDVSLPAVGQGAVGIECRLDDARTQALLAPLNHSQTALRVTAERAMNTRLEGGCQVPIGSYAEIINGEIWLRALVGAPDGSVMVRGERRGSPEQAEQMGISLAEELLENGARAILTEVYNGETPA.

At cysteine 242 the chain carries S-(dipyrrolylmethanemethyl)cysteine.

This sequence belongs to the HMBS family. As to quaternary structure, monomer. The cofactor is dipyrromethane.

It carries out the reaction 4 porphobilinogen + H2O = hydroxymethylbilane + 4 NH4(+). It functions in the pathway porphyrin-containing compound metabolism; protoporphyrin-IX biosynthesis; coproporphyrinogen-III from 5-aminolevulinate: step 2/4. Its function is as follows. Tetrapolymerization of the monopyrrole PBG into the hydroxymethylbilane pre-uroporphyrinogen in several discrete steps. In Salmonella dublin (strain CT_02021853), this protein is Porphobilinogen deaminase.